The primary structure comprises 100 residues: C-X-C motif chemokine 2 (100 aa).

An N-terminal signal peptide occupies residues 1–31 (MAPPTRQLLNAVLVLLLLLATNHQGTGVVVA). Cystine bridges form between cysteine 36–cysteine 62 and cysteine 38–cysteine 78.

It belongs to the intercrine alpha (chemokine CxC) family. Homotetramer. At least expressed in the lung and trachea.

It localises to the secreted. In terms of biological role, chemotactic for human polymorphonuclear leukocytes but does not induce chemokinesis or an oxidative burst. Contributes to neutrophil activation during inflammation. The sequence is that of C-X-C motif chemokine 2 (Cxcl2) from Rattus norvegicus (Rat).